A 138-amino-acid chain; its full sequence is Basic phospholipase A2 Tpu-G6D49 (138 aa).

The first 16 residues, 1 to 16 (MRTLWIMAVLLVGVEG), serve as a signal peptide directing secretion. 7 disulfide bridges follow: Cys-42-Cys-131, Cys-44-Cys-60, Cys-59-Cys-111, Cys-65-Cys-138, Cys-66-Cys-104, Cys-73-Cys-97, and Cys-91-Cys-102. Ca(2+) is bound by residues Tyr-43, Gly-45, and Gly-47. The active site involves His-63. Asp-64 provides a ligand contact to Ca(2+). Residue Asp-105 is part of the active site.

Monomer. Ca(2+) is required as a cofactor. Expressed by the venom gland.

It localises to the secreted. The enzyme catalyses a 1,2-diacyl-sn-glycero-3-phosphocholine + H2O = a 1-acyl-sn-glycero-3-phosphocholine + a fatty acid + H(+). Its function is as follows. Snake venom phospholipase A2 (PLA2) that impairs hemostasis. It weakly inhibits ADP-induced platelet aggregation when tested on platelet rich plasma from human and rabbit blood (15-25% of inhibition at 5-10 ug of enzyme), and dose-dependently inhibits blood coagulation, possibly by inhibiting thrombin activation. Also induces local edema a few hours after injection in the hind foot. Exhibits high hydrolytic activities toward L-dipalmitoyl phosphatidylcholine. PLA2 catalyzes the calcium-dependent hydrolysis of the 2-acyl groups in 3-sn-phosphoglycerides. This Craspedocephalus puniceus (Flat-nosed pitviper) protein is Basic phospholipase A2 Tpu-G6D49.